Here is a 297-residue protein sequence, read N- to C-terminus: Probable oxidoreductase (297 aa).

An NAD(+)-binding site is contributed by 9-33; sequence VVTGGASGLGAETVRALAAAGAEVT. Residue serine 138 coordinates substrate. The active-site Proton acceptor is tyrosine 164.

It belongs to the short-chain dehydrogenases/reductases (SDR) family.

The protein is Probable oxidoreductase of Streptomyces lividans.